A 155-amino-acid chain; its full sequence is Small ribosomal subunit protein uS7cz/uS7cy (155 aa).

The protein belongs to the universal ribosomal protein uS7 family. As to quaternary structure, part of the 30S ribosomal subunit.

It localises to the plastid. The protein resides in the chloroplast. Functionally, one of the primary rRNA binding proteins, it binds directly to 16S rRNA where it nucleates assembly of the head domain of the 30S subunit. This chain is Small ribosomal subunit protein uS7cz/uS7cy (rps7-A), found in Crucihimalaya wallichii (Rock-cress).